Consider the following 151-residue polypeptide: Deoxyuridine 5'-triphosphate nucleotidohydrolase (151 aa).

Residues 70-72, N83, 87-89, and M97 each bind substrate; these read RSG and LID.

This sequence belongs to the dUTPase family. Mg(2+) serves as cofactor.

It catalyses the reaction dUTP + H2O = dUMP + diphosphate + H(+). It participates in pyrimidine metabolism; dUMP biosynthesis; dUMP from dCTP (dUTP route): step 2/2. Functionally, this enzyme is involved in nucleotide metabolism: it produces dUMP, the immediate precursor of thymidine nucleotides and it decreases the intracellular concentration of dUTP so that uracil cannot be incorporated into DNA. This is Deoxyuridine 5'-triphosphate nucleotidohydrolase from Pseudomonas syringae pv. syringae (strain B728a).